Consider the following 376-residue polypeptide: Chaperone protein DnaJ (376 aa).

One can recognise a J domain in the interval 5 to 70 (DYYEILGVSK…QKRAAYDQYG (66 aa)). A CR-type zinc finger spans residues 131–209 (GVTKEIRIPT…CHGHGRVERS (79 aa)). Zn(2+)-binding residues include Cys144, Cys147, Cys161, Cys164, Cys183, Cys186, Cys197, and Cys200. CXXCXGXG motif repeat units lie at residues 144–151 (CDVCHGSG), 161–168 (CPTCHGSG), 183–190 (CPHCQGRG), and 197–204 (CNKCHGHG).

This sequence belongs to the DnaJ family. Homodimer. It depends on Zn(2+) as a cofactor.

It localises to the cytoplasm. In terms of biological role, participates actively in the response to hyperosmotic and heat shock by preventing the aggregation of stress-denatured proteins and by disaggregating proteins, also in an autonomous, DnaK-independent fashion. Unfolded proteins bind initially to DnaJ; upon interaction with the DnaJ-bound protein, DnaK hydrolyzes its bound ATP, resulting in the formation of a stable complex. GrpE releases ADP from DnaK; ATP binding to DnaK triggers the release of the substrate protein, thus completing the reaction cycle. Several rounds of ATP-dependent interactions between DnaJ, DnaK and GrpE are required for fully efficient folding. Also involved, together with DnaK and GrpE, in the DNA replication of plasmids through activation of initiation proteins. This Shigella dysenteriae serotype 1 (strain Sd197) protein is Chaperone protein DnaJ.